The sequence spans 59 residues: Small, acid-soluble spore protein H 1 (59 aa).

The protein belongs to the SspH family.

Its subcellular location is the spore core. The sequence is that of Small, acid-soluble spore protein H 1 (sspH1) from Bacillus cereus (strain ATCC 14579 / DSM 31 / CCUG 7414 / JCM 2152 / NBRC 15305 / NCIMB 9373 / NCTC 2599 / NRRL B-3711).